Here is an 831-residue protein sequence, read N- to C-terminus: V-type proton ATPase 116 kDa subunit a1 (831 aa).

Residues 1-388 are Cytoplasmic-facing; sequence MGELFRSEEM…DAYGIGSYRE (388 aa). Residues 389 to 407 form a helical membrane-spanning segment; that stretch reads INPAPYTIITFPFLFAVMF. Residues 408–409 are Vacuolar-facing; it reads GD. Residues 410 to 426 form a helical membrane-spanning segment; sequence FGHGILMTLFAVWMVVR. At 427 to 441 the chain is on the cytoplasmic side; that stretch reads ESRILSQKIDNELFS. Residues 442–471 traverse the membrane as a helical segment; sequence MMFSGRYIILLMGLFSTYTGLIYNDCFSKA. Topologically, residues 472–534 are vacuolar; that stretch reads LNLFGSSWSV…ATNKLTFLNS (63 aa). The helical transmembrane segment at 535-554 threads the bilayer; it reads FKMKMSVILGIIHMIFGVAL. The Cytoplasmic portion of the chain corresponds to 555–572; sequence SVLNHIYFKKPLNIYLSF. The chain crosses the membrane as a helical span at residues 573–593; it reads IPEMIFMTTLFGYLVILIIYK. Over 594-638 the chain is Vacuolar; the sequence is WCAYDVSTSMVAPSLLIHFINMFLFSYQDTSLPMLYKGQMGLQCF. The chain crosses the membrane as a helical span at residues 639 to 658; the sequence is LVVCAIICVPWMLVLKPLIL. At 659–718 the chain is on the cytoplasmic side; sequence RRQYLRRKHLGTHNFGGIRVGNGPTEEDAEIIQHDQLSMHSDEEEEFDFGDTVVHQAIHT. A helical transmembrane segment spans residues 719–743; the sequence is IEYCLGCISNTASYLRLWALSLAHA. The Vacuolar portion of the chain corresponds to 744–764; it reads QLSEVLWTMVMHIGLNIRSLG. A helical transmembrane segment spans residues 765–803; sequence GGIALVFIFSAFATLTIAILLIMEGLSAFLHALRLHWVE. Residues 804 to 831 lie on the Cytoplasmic side of the membrane; it reads FRNKFYMGTGFKFLPFSFETIWEGKFDD.

It belongs to the V-ATPase 116 kDa subunit family. V-ATPase is a heteromultimeric enzyme made up of two complexes: the ATP-hydrolytic V1 complex and the proton translocation V0 complex. The V1 complex consists of three catalytic AB heterodimers that form a heterohexamer, three peripheral stalks each consisting of EG heterodimers, one central rotor including subunits D and F, and the regulatory subunits C and H. The proton translocation complex V0 consists of the proton transport subunit a, a ring of proteolipid subunits c9c'', rotary subunit d, subunits e and f, and two accessory subunits.

It is found in the cytoplasmic vesicle. The protein resides in the clathrin-coated vesicle membrane. It localises to the secretory vesicle. Its subcellular location is the synaptic vesicle membrane. The protein localises to the melanosome. Functionally, subunit of the V0 complex of vacuolar(H+)-ATPase (V-ATPase), a multisubunit enzyme composed of a peripheral complex (V1) that hydrolyzes ATP and a membrane integral complex (V0) that translocates protons. V-ATPase is responsible for acidifying and maintaining the pH of intracellular compartments and in some cell types, is targeted to the plasma membrane, where it is responsible for acidifying the extracellular environment. Required for assembly and activity of the vacuolar ATPase. This Xenopus laevis (African clawed frog) protein is V-type proton ATPase 116 kDa subunit a1 (atp6v0a1).